Consider the following 485-residue polypeptide: Glutamyl-tRNA(Gln) amidotransferase subunit A (485 aa).

Catalysis depends on charge relay system residues K78 and S153. The active-site Acyl-ester intermediate is the S177.

This sequence belongs to the amidase family. GatA subfamily. In terms of assembly, heterotrimer of A, B and C subunits.

The enzyme catalyses L-glutamyl-tRNA(Gln) + L-glutamine + ATP + H2O = L-glutaminyl-tRNA(Gln) + L-glutamate + ADP + phosphate + H(+). Allows the formation of correctly charged Gln-tRNA(Gln) through the transamidation of misacylated Glu-tRNA(Gln) in organisms which lack glutaminyl-tRNA synthetase. The reaction takes place in the presence of glutamine and ATP through an activated gamma-phospho-Glu-tRNA(Gln). The chain is Glutamyl-tRNA(Gln) amidotransferase subunit A from Desulfotalea psychrophila (strain LSv54 / DSM 12343).